The primary structure comprises 573 residues: Methionine--tRNA ligase (573 aa).

The 'HIGH' region signature appears at 10–20 (PYVNSVPHLGN). 4 residues coordinate Zn(2+): Cys-143, Cys-146, Cys-156, and Cys-159. The short motif at 333-337 (KFSKS) is the 'KMSKS' region element. Lys-336 lines the ATP pocket.

It belongs to the class-I aminoacyl-tRNA synthetase family. MetG type 1 subfamily. Zn(2+) is required as a cofactor.

It is found in the cytoplasm. It catalyses the reaction tRNA(Met) + L-methionine + ATP = L-methionyl-tRNA(Met) + AMP + diphosphate. Functionally, is required not only for elongation of protein synthesis but also for the initiation of all mRNA translation through initiator tRNA(fMet) aminoacylation. This Saccharolobus solfataricus (strain ATCC 35092 / DSM 1617 / JCM 11322 / P2) (Sulfolobus solfataricus) protein is Methionine--tRNA ligase.